Here is a 234-residue protein sequence, read N- to C-terminus: Leucyl/phenylalanyl-tRNA--protein transferase (234 aa).

The protein belongs to the L/F-transferase family.

Its subcellular location is the cytoplasm. It carries out the reaction N-terminal L-lysyl-[protein] + L-leucyl-tRNA(Leu) = N-terminal L-leucyl-L-lysyl-[protein] + tRNA(Leu) + H(+). The enzyme catalyses N-terminal L-arginyl-[protein] + L-leucyl-tRNA(Leu) = N-terminal L-leucyl-L-arginyl-[protein] + tRNA(Leu) + H(+). The catalysed reaction is L-phenylalanyl-tRNA(Phe) + an N-terminal L-alpha-aminoacyl-[protein] = an N-terminal L-phenylalanyl-L-alpha-aminoacyl-[protein] + tRNA(Phe). Functionally, functions in the N-end rule pathway of protein degradation where it conjugates Leu, Phe and, less efficiently, Met from aminoacyl-tRNAs to the N-termini of proteins containing an N-terminal arginine or lysine. The polypeptide is Leucyl/phenylalanyl-tRNA--protein transferase (Dechloromonas aromatica (strain RCB)).